We begin with the raw amino-acid sequence, 55 residues long: uncharacterized protein (55 aa).

This is an uncharacterized protein from Acidithiobacillus ferrooxidans (Thiobacillus ferrooxidans).